The primary structure comprises 320 residues: Mitochondrial fission regulator 1-like-B (320 aa).

The segment at 1-37 (MASLGAAAEPERSLFGKDGAEACESPEGRRSGRRKRT) is disordered. The segment covering 9–30 (EPERSLFGKDGAEACESPEGRR) has biased composition (basic and acidic residues).

Belongs to the MTFR1 family.

The protein localises to the mitochondrion outer membrane. Its function is as follows. Mitochondrial protein required for adaptation of miochondrial dynamics to metabolic changes. Regulates mitochondrial morphology at steady state and mediates AMPK-dependent stress-induced mitochondrial fragmentation via the control of OPA1 levels. The polypeptide is Mitochondrial fission regulator 1-like-B (mtfr1l-b) (Xenopus laevis (African clawed frog)).